Consider the following 452-residue polypeptide: Bifunctional protein GlmU (452 aa).

The pyrophosphorylase stretch occupies residues 1 to 226 (MNFSAVILAA…PIEVEGVNDR (226 aa)). Residues 8 to 11 (LAAG), Lys22, Gln73, 78 to 79 (GT), 100 to 102 (YGD), Gly137, Glu151, Asn166, and Asn224 each bind UDP-N-acetyl-alpha-D-glucosamine. Asp102 provides a ligand contact to Mg(2+). Mg(2+) is bound at residue Asn224. Positions 227-247 (AQLARLERAYQAAQAQKLLEQ) are linker. The N-acetyltransferase stretch occupies residues 248 to 452 (GVMLRDPSRF…IANWQRPTKK (205 aa)). Arg330 and Lys348 together coordinate UDP-N-acetyl-alpha-D-glucosamine. His360 functions as the Proton acceptor in the catalytic mechanism. 2 residues coordinate UDP-N-acetyl-alpha-D-glucosamine: Tyr363 and Asn374. Acetyl-CoA contacts are provided by residues Ala377, 383–384 (NY), Ser402, Ala420, and Arg437.

It in the N-terminal section; belongs to the N-acetylglucosamine-1-phosphate uridyltransferase family. This sequence in the C-terminal section; belongs to the transferase hexapeptide repeat family. In terms of assembly, homotrimer. Mg(2+) is required as a cofactor.

The protein localises to the cytoplasm. It catalyses the reaction alpha-D-glucosamine 1-phosphate + acetyl-CoA = N-acetyl-alpha-D-glucosamine 1-phosphate + CoA + H(+). The enzyme catalyses N-acetyl-alpha-D-glucosamine 1-phosphate + UTP + H(+) = UDP-N-acetyl-alpha-D-glucosamine + diphosphate. It functions in the pathway nucleotide-sugar biosynthesis; UDP-N-acetyl-alpha-D-glucosamine biosynthesis; N-acetyl-alpha-D-glucosamine 1-phosphate from alpha-D-glucosamine 6-phosphate (route II): step 2/2. It participates in nucleotide-sugar biosynthesis; UDP-N-acetyl-alpha-D-glucosamine biosynthesis; UDP-N-acetyl-alpha-D-glucosamine from N-acetyl-alpha-D-glucosamine 1-phosphate: step 1/1. Its pathway is bacterial outer membrane biogenesis; LPS lipid A biosynthesis. Catalyzes the last two sequential reactions in the de novo biosynthetic pathway for UDP-N-acetylglucosamine (UDP-GlcNAc). The C-terminal domain catalyzes the transfer of acetyl group from acetyl coenzyme A to glucosamine-1-phosphate (GlcN-1-P) to produce N-acetylglucosamine-1-phosphate (GlcNAc-1-P), which is converted into UDP-GlcNAc by the transfer of uridine 5-monophosphate (from uridine 5-triphosphate), a reaction catalyzed by the N-terminal domain. This chain is Bifunctional protein GlmU, found in Aliivibrio fischeri (strain MJ11) (Vibrio fischeri).